We begin with the raw amino-acid sequence, 130 residues long: Protein ApaG (130 aa).

The ApaG domain occupies 3-127 (RALTRDIEVT…FSLDTPDLRR (125 aa)).

This chain is Protein ApaG, found in Allorhizobium ampelinum (strain ATCC BAA-846 / DSM 112012 / S4) (Agrobacterium vitis (strain S4)).